The following is a 957-amino-acid chain: Glycine dehydrogenase (decarboxylating) (957 aa).

The residue at position 708 (Lys-708) is an N6-(pyridoxal phosphate)lysine.

It belongs to the GcvP family. As to quaternary structure, the glycine cleavage system is composed of four proteins: P, T, L and H. Pyridoxal 5'-phosphate is required as a cofactor.

The enzyme catalyses N(6)-[(R)-lipoyl]-L-lysyl-[glycine-cleavage complex H protein] + glycine + H(+) = N(6)-[(R)-S(8)-aminomethyldihydrolipoyl]-L-lysyl-[glycine-cleavage complex H protein] + CO2. Functionally, the glycine cleavage system catalyzes the degradation of glycine. The P protein binds the alpha-amino group of glycine through its pyridoxal phosphate cofactor; CO(2) is released and the remaining methylamine moiety is then transferred to the lipoamide cofactor of the H protein. The protein is Glycine dehydrogenase (decarboxylating) of Escherichia coli O7:K1 (strain IAI39 / ExPEC).